The chain runs to 740 residues: ATP-dependent zinc metalloprotease YME1L (740 aa).

Topologically, residues 1–256 are mitochondrial matrix; the sequence is MFSTTTHSVP…KSGKTMKYLK (256 aa). Residues 257-277 form a helical membrane-spanning segment; that stretch reads TLQTIVVIVVFLGIFLSFFTT. The Mitochondrial intermembrane segment spans residues 278–740; the sequence is SNGSVFRSIQ…IKAILNESQT (463 aa). 347–351 contributes to the ATP binding site; the sequence is GTGKT. Histidine 563 lines the Zn(2+) pocket. Residue glutamate 564 is part of the active site. Zn(2+) contacts are provided by histidine 567 and aspartate 641.

It in the N-terminal section; belongs to the AAA ATPase family. This sequence in the C-terminal section; belongs to the peptidase M41 family. It depends on Zn(2+) as a cofactor.

Its subcellular location is the mitochondrion inner membrane. In terms of biological role, ATP-dependent metalloprotease that catalyzes the degradation of folded and unfolded proteins with a suitable degron sequence in the mitochondrial intermembrane region. Plays an important role in regulating mitochondrial morphology and function by cleaving Opa1, giving rise to a form of Opa1 that promotes maintenance of normal mitochondrial structure and mitochondrial protein metabolism. Ensures cell proliferation, maintains normal cristae morphology and complex I respiration activity, promotes antiapoptotic activity and protects mitochondria from the accumulation of oxidatively damaged membrane proteins. Required to control the accumulation of nonassembled respiratory chain subunits such as ND-30. This Drosophila melanogaster (Fruit fly) protein is ATP-dependent zinc metalloprotease YME1L.